A 386-amino-acid chain; its full sequence is Rhomboid domain-containing protein 3 (386 aa).

The next 5 membrane-spanning stretches (helical) occupy residues 20-40 (VLML…LVLA), 58-78 (LGHT…TVGW), 92-112 (ASAL…GLGL), 141-161 (GALP…LLSS), and 163-183 (PPFL…AGAF). Residues 324–362 (VSSLRLQQLERMGFPTEQAVVALAATGRVEGAVSLLVGG) enclose the UBA domain.

It is found in the membrane. This Homo sapiens (Human) protein is Rhomboid domain-containing protein 3 (RHBDD3).